Here is a 439-residue protein sequence, read N- to C-terminus: GTPase Der (439 aa).

2 EngA-type G domains span residues 4-169 (AMVA…PEND) and 177-352 (IKIA…EEYN). GTP-binding positions include 10 to 17 (GRPNVGKS), 57 to 61 (DTGGL), 120 to 123 (NKVD), 183 to 190 (GRPNVGKS), 230 to 234 (DTAGI), and 295 to 298 (NKWD). The KH-like domain maps to 353-437 (KRITTGLLNN…PIVISTKKRG (85 aa)).

It belongs to the TRAFAC class TrmE-Era-EngA-EngB-Septin-like GTPase superfamily. EngA (Der) GTPase family. Associates with the 50S ribosomal subunit.

Functionally, GTPase that plays an essential role in the late steps of ribosome biogenesis. The sequence is that of GTPase Der from Caldanaerobacter subterraneus subsp. tengcongensis (strain DSM 15242 / JCM 11007 / NBRC 100824 / MB4) (Thermoanaerobacter tengcongensis).